Reading from the N-terminus, the 120-residue chain is Large ribosomal subunit protein uL18 (120 aa).

It belongs to the universal ribosomal protein uL18 family. Part of the 50S ribosomal subunit; part of the 5S rRNA/L5/L18/L25 subcomplex. Contacts the 5S and 23S rRNAs.

In terms of biological role, this is one of the proteins that bind and probably mediate the attachment of the 5S RNA into the large ribosomal subunit, where it forms part of the central protuberance. The sequence is that of Large ribosomal subunit protein uL18 from Geobacillus sp. (strain WCH70).